The sequence spans 544 residues: D-2-hydroxyglutarate dehydrogenase, mitochondrial (544 aa).

The transit peptide at 1–10 (MMMPRLVPRW) directs the protein to the mitochondrion. One can recognise an FAD-binding PCMH-type domain in the interval 119 to 298 (VRGSSKVLLR…TAVSILCPPK (180 aa)). N6-succinyllysine is present on Lys-124. (R)-2-hydroxyglutarate-binding residues include Arg-409, Thr-413, and Lys-424. (R)-lactate is bound at residue Arg-409. Positions 409, 413, and 424 each coordinate (R)-malate. 2 residues coordinate Zn(2+): His-457 and His-464. Asn-466 serves as a coordination point for (R)-2-hydroxyglutarate. Glu-498 is a Zn(2+) binding site. Residue His-499 participates in (R)-2-hydroxyglutarate binding. Residue His-499 coordinates (R)-lactate. His-499 serves as a coordination point for (R)-malate.

Belongs to the FAD-binding oxidoreductase/transferase type 4 family. It depends on FAD as a cofactor.

It localises to the mitochondrion. The enzyme catalyses (R)-2-hydroxyglutarate + A = 2-oxoglutarate + AH2. The catalysed reaction is (R)-malate + A = oxaloacetate + AH2. With respect to regulation, activated by zinc and cobalt ions. Functionally, catalyzes the oxidation of D-2-hydroxyglutarate (D-2-HG) to alpha-ketoglutarate. Also catalyzes the oxidation of other D-2-hydroxyacids, such as D-malate (D-MAL) and D-lactate (D-LAC). Exhibits high activities towards D-2-HG and D-MAL but a very weak activity towards D-LAC. This chain is D-2-hydroxyglutarate dehydrogenase, mitochondrial (D2HGDH), found in Bos taurus (Bovine).